The following is a 257-amino-acid chain: Imidazole glycerol phosphate synthase subunit HisF (257 aa).

Residues D11 and D130 contribute to the active site.

This sequence belongs to the HisA/HisF family. As to quaternary structure, heterodimer of HisH and HisF.

Its subcellular location is the cytoplasm. It catalyses the reaction 5-[(5-phospho-1-deoxy-D-ribulos-1-ylimino)methylamino]-1-(5-phospho-beta-D-ribosyl)imidazole-4-carboxamide + L-glutamine = D-erythro-1-(imidazol-4-yl)glycerol 3-phosphate + 5-amino-1-(5-phospho-beta-D-ribosyl)imidazole-4-carboxamide + L-glutamate + H(+). Its pathway is amino-acid biosynthesis; L-histidine biosynthesis; L-histidine from 5-phospho-alpha-D-ribose 1-diphosphate: step 5/9. Its function is as follows. IGPS catalyzes the conversion of PRFAR and glutamine to IGP, AICAR and glutamate. The HisF subunit catalyzes the cyclization activity that produces IGP and AICAR from PRFAR using the ammonia provided by the HisH subunit. This Trichormus variabilis (strain ATCC 29413 / PCC 7937) (Anabaena variabilis) protein is Imidazole glycerol phosphate synthase subunit HisF.